A 410-amino-acid chain; its full sequence is MAASNQSEVNIGMVGHVDHGKTSLTRKLTGVWTDTHSEELKRGISIRLGYADCEIKKCETCDEPECYTVDKKCDACGGKVSTLRKISFVDAPGHETLMATMLSGASLMDGAILVIAASEECPQPQTKEHLMALDALGVEHILIVQNKIDLVSEEAAIENYNQIKEFTKGTVAENAPIIPVSAHHGANLDVLLKAIQEFIPTPERDETLTPKLYVARSFDVNKPGSEIKDLKGGVIGGSIIQGALKVGDDLEIRPGIKVTEGNKTHWVPIVTKIISLGVGGKKLKSAAPGGLIGVGTELDPNLTKSDALSGSLAGLPGTLPETLEKMVIKPQLLERVVGSQDELIIEPLKTNEVLMLNVGTSTTVGVTVSARADKAEIKLKLPVCADKGDRVAISRKIGSRWRLIGYGIIL.

The tr-type G domain occupies 6 to 203; sequence QSEVNIGMVG…AIQEFIPTPE (198 aa). The interval 15–22 is G1; sequence GHVDHGKT. Asp-18, Thr-22, Gly-43, and Ser-45 together coordinate Mg(2+). 18–23 contributes to the GTP binding site; the sequence is DHGKTS. The tract at residues 43–47 is G2; sequence GISIR. Zn(2+)-binding residues include Cys-58, Cys-61, Cys-73, and Cys-76. The segment at 90-93 is G3; the sequence is DAPG. GTP-binding positions include 146 to 149 and 181 to 183; these read NKID and SAH. A G4 region spans residues 146–149; the sequence is NKID. A G5 region spans residues 181–183; the sequence is SAH.

The protein belongs to the TRAFAC class translation factor GTPase superfamily. Classic translation factor GTPase family. EIF2G subfamily. As to quaternary structure, heterotrimer composed of an alpha, a beta and a gamma chain. The cofactor is Mg(2+).

The enzyme catalyses GTP + H2O = GDP + phosphate + H(+). Functionally, eIF-2 functions in the early steps of protein synthesis by forming a ternary complex with GTP and initiator tRNA. The protein is Translation initiation factor 2 subunit gamma of Methanococcus maripaludis (strain C7 / ATCC BAA-1331).